The chain runs to 89 residues: Small ribosomal subunit protein uS15 (89 aa).

It belongs to the universal ribosomal protein uS15 family. Part of the 30S ribosomal subunit. Forms a bridge to the 50S subunit in the 70S ribosome, contacting the 23S rRNA.

In terms of biological role, one of the primary rRNA binding proteins, it binds directly to 16S rRNA where it helps nucleate assembly of the platform of the 30S subunit by binding and bridging several RNA helices of the 16S rRNA. Forms an intersubunit bridge (bridge B4) with the 23S rRNA of the 50S subunit in the ribosome. The polypeptide is Small ribosomal subunit protein uS15 (Pediococcus pentosaceus (strain ATCC 25745 / CCUG 21536 / LMG 10740 / 183-1w)).